We begin with the raw amino-acid sequence, 259 residues long: Ovulation prohormone (259 aa).

The first 34 residues, 1 to 34, serve as a signal peptide directing secretion; that stretch reads MKMSGLLSKPDYGVVGIVFTVVFCCWCSSSTTHA. Residues 35 to 102 constitute a propeptide that is removed on maturation; that stretch reads LSIAEPGRDR…SGEKTRLTAA (68 aa). The tract at residues 42 to 103 is disordered; that stretch reads RDRYDKRSPT…GEKTRLTAAK (62 aa). 2 consecutive repeats follow at residues 119–123 and 146–150; these read RLRFH. The segment at 119–150 is 2 X 5 AA repeats of R-L-R-F-H; sequence RLRFHKRRVDSADESNDDGFDRKAREPRLRFH. Residues 149–197 form a disordered region; the sequence is FHDVRKRSATAEEGSENAEIEESHLGNSRSRRSAGSAPSSANEVQRSKR. The propeptide occupies 181–195; it reads SAGSAPSSANEVQRS. L233 carries the leucine amide modification. Positions 237-259 are excised as a propeptide; it reads GSAFFDHIPIIFGEPQYDYQPFK.

The protein belongs to the molluscan ELH family.

Its subcellular location is the secreted. In terms of biological role, CDCH induces ovulation and egg-mass production; it may also stimulate synthesis of secretory products in the female accessory sex glands and affect neurons in the neuronal circuits controlling locomotion and feeding. Functionally, calfluxin is involved in the influx of calcium into mitochondria of the albumen gland. Its function is as follows. CDCA (or alpha-CDCP) triggers the electrical activity of the caudodorsal cells (CDCS). The sequence is that of Ovulation prohormone from Lymnaea stagnalis (Great pond snail).